A 255-amino-acid chain; its full sequence is Aprataxin and PNK-like factor (255 aa).

The segment covering 1–11 (MSATDASTADS) has biased composition (low complexity). 3 disordered regions span residues 1 to 117 (MSAT…VSSS), 131 to 168 (RRNPAHRSAEAHPGDQDYRRPNFPAPPLGTPACPFGNA), and 195 to 255 (RLRQ…DDYD). Composition is skewed to basic and acidic residues over residues 12 to 22 (GAKRKSSEDIT), 40 to 64 (KSEEPVASIKDETNPEVPMKIKAEP), and 137 to 150 (RSAEAHPGDQDYRR). 2 consecutive PBZ-type zinc fingers follow at residues 121–142 (TSCRFGIRCYRRNPAHRSAEAH) and 161–182 (PACPFGNACYRRNPVHFQDYSH). A compositionally biased stretch (acidic residues) spans 207-218 (DDSGTDEEDEPF). The segment covering 221–230 (DNDRDADYRP) has biased composition (basic and acidic residues). Residues 234–244 (INEDEDDELEF) are compositionally biased toward acidic residues.

This sequence belongs to the APLF family.

Functionally, displays apurinic-apyrimidinic (AP) endonuclease and 3'-5' exonuclease activities in vitro. The chain is Aprataxin and PNK-like factor from Drosophila melanogaster (Fruit fly).